Reading from the N-terminus, the 148-residue chain is Truncated transcription factor CAULIFLOWER D (148 aa).

The region spanning 1–61 is the MADS-box domain; sequence MGRGRVEMKR…GKLFEYSSES (61 aa). In terms of domain architecture, K-box; partial spans 90-148; sequence QTNWSMEYSRLKAKIELWERNQRHYLGEDLESISIKELQNLEQQLDTSLKHIRSRKVCK.

Homodimer capable of binding to CArG-box sequences.

Its subcellular location is the nucleus. Its function is as follows. Probable transcription factor that promotes early floral meristem identity in synergy with APETALA1, FRUITFULL and LEAFY. Is required subsequently for the transition of an inflorescence meristem into a floral meristem. Seems to be partially redundant to the function of APETALA1. In Brassica oleracea var. botrytis (Cauliflower), this protein is Truncated transcription factor CAULIFLOWER D (CAL-D).